The sequence spans 966 residues: Collagen alpha-1(I) chain (966 aa).

The disordered stretch occupies residues serine 1–proline 966. Lysine 7 is subject to Allysine. Phosphoserine is present on serine 8. 4-hydroxyproline is present on residues proline 27, proline 30, proline 32, proline 41, proline 44, proline 47, proline 61, proline 76, proline 82, proline 91, and proline 97. The segment covering asparagine 64–glutamate 78 has biased composition (basic and acidic residues). Lysine 100 carries the post-translational modification 5-hydroxylysine; alternate. Residue lysine 100 is glycosylated (O-linked (Gal...) hydroxylysine; alternate). Serine 106 carries the post-translational modification Phosphoserine. The span at aspartate 114–asparagine 130 shows a compositional bias: low complexity. Residues proline 124, proline 127, proline 133, proline 142, proline 148, proline 169, proline 178, proline 181, proline 208, proline 211, proline 223, proline 229, proline 238, proline 244, proline 247, and proline 262 each carry the 4-hydroxyproline modification. Residues proline 148–alanine 166 are compositionally biased toward low complexity. Residues proline 168 to phenylalanine 180 show a composition bias toward pro residues. Residues alanine 214–serine 253 are compositionally biased toward low complexity. A 5-hydroxylysine modification is found at lysine 265. 8 positions are modified to 4-hydroxyproline: proline 271, proline 274, proline 286, proline 295, proline 310, proline 316, proline 325, and proline 331. The segment covering glycine 320 to glycine 329 has biased composition (gly residues). Lysine 340 bears the 5-hydroxylysine mark. Proline 349, proline 358, proline 364, proline 370, proline 379, proline 382, proline 391, proline 400, proline 406, proline 418, proline 427, proline 436, proline 439, proline 457, proline 475, proline 481, proline 487, proline 493, proline 499, proline 505, proline 517, proline 526, proline 538, proline 542, proline 548, proline 554, and proline 563 each carry 4-hydroxyproline. The span at lysine 373–arginine 399 shows a compositional bias: low complexity. The span at alanine 408–proline 427 shows a compositional bias: low complexity. The span at glutamine 469–glutamine 496 shows a compositional bias: low complexity. Position 575 is a 5-hydroxylysine (lysine 575). 3 positions are modified to 4-hydroxyproline: proline 581, proline 596, and proline 602. The span at serine 608–alanine 622 shows a compositional bias: low complexity. Serine 611 is modified (phosphoserine). 4-hydroxyproline occurs at positions 623, 629, 632, 641, 647, 665, 674, and 683. A compositionally biased stretch (low complexity) spans alanine 635–alanine 662. A compositionally biased stretch (pro residues) spans proline 664–proline 676. Lysine 686 is modified (5-hydroxylysine). A compositionally biased stretch (low complexity) spans serine 691–valine 707. A 4-hydroxyproline mark is found at proline 695 and proline 701. Proline 709 is subject to 3-hydroxyproline. 4-hydroxyproline occurs at positions 710, 719, 722, 746, 755, 773, 782, 785, 791, 806, 812, 818, 826, and 832. Positions glutamate 736–proline 755 are enriched in low complexity. The segment covering proline 805–alanine 815 has biased composition (pro residues). Residues glutamate 824 to glycine 835 show a composition bias toward gly residues. Over residues alanine 852–proline 866 the composition is skewed to low complexity. Over residues arginine 867–isoleucine 881 the composition is skewed to basic and acidic residues. Residue lysine 870 is modified to 5-hydroxylysine. Lysine 882 carries the 5-hydroxylysine; alternate modification. A glycan (O-linked (Gal...) hydroxylysine; alternate) is linked at lysine 882. 4 positions are modified to 4-hydroxyproline: proline 897, proline 900, proline 918, and proline 933. The segment covering proline 900–proline 933 has biased composition (low complexity). 3-hydroxyproline is present on proline 938. Proline 939 bears the 4-hydroxyproline mark. Pro residues predominate over residues valine 951–proline 966. Proline 953 carries the post-translational modification 3-hydroxyproline. Proline 954 bears the 4-hydroxyproline mark. Proline 956 carries the post-translational modification 3-hydroxyproline. Proline 957 bears the 4-hydroxyproline mark. Proline 959 carries the post-translational modification 3-hydroxyproline. A 4-hydroxyproline mark is found at proline 960, proline 963, and proline 966.

This sequence belongs to the fibrillar collagen family. As to quaternary structure, trimers of one alpha 2(I) and two alpha 1(I) chains. In terms of processing, contains mostly 4-hydroxyproline. Proline residues at the third position of the tripeptide repeating unit (G-X-Y) are hydroxylated in some or all of the chains. Contains 3-hydroxyproline at a few sites. This modification occurs on the first proline residue in the sequence motif Gly-Pro-Hyp, where Hyp is 4-hydroxyproline. Post-translationally, lysine residues at the third position of the tripeptide repeating unit (G-X-Y) are 5-hydroxylated in some or all of the chains. In terms of processing, O-glycosylated on hydroxylated lysine residues. The O-linked glycan consists of a Glc-Gal disaccharide. As to expression, expressed in bones.

Its subcellular location is the secreted. It is found in the extracellular space. It localises to the extracellular matrix. Functionally, type I collagen is a member of group I collagen (fibrillar forming collagen). The protein is Collagen alpha-1(I) chain of Bradypus variegatus (Brown-throated three-fingered sloth).